The chain runs to 161 residues: 2-C-methyl-D-erythritol 2,4-cyclodiphosphate synthase (161 aa).

A divalent metal cation is bound by residues D10 and H12. Residues 10-12 (DVH) and 36-37 (HS) each bind 4-CDP-2-C-methyl-D-erythritol 2-phosphate. A divalent metal cation is bound at residue H44. Residues 58-60 (DIG), 63-67 (FPDTD), 102-108 (AQAPKMA), 134-137 (TTTE), F141, and R144 each bind 4-CDP-2-C-methyl-D-erythritol 2-phosphate.

It belongs to the IspF family. Homotrimer. Requires a divalent metal cation as cofactor.

The catalysed reaction is 4-CDP-2-C-methyl-D-erythritol 2-phosphate = 2-C-methyl-D-erythritol 2,4-cyclic diphosphate + CMP. It functions in the pathway isoprenoid biosynthesis; isopentenyl diphosphate biosynthesis via DXP pathway; isopentenyl diphosphate from 1-deoxy-D-xylulose 5-phosphate: step 4/6. Functionally, involved in the biosynthesis of isopentenyl diphosphate (IPP) and dimethylallyl diphosphate (DMAPP), two major building blocks of isoprenoid compounds. Catalyzes the conversion of 4-diphosphocytidyl-2-C-methyl-D-erythritol 2-phosphate (CDP-ME2P) to 2-C-methyl-D-erythritol 2,4-cyclodiphosphate (ME-CPP) with a corresponding release of cytidine 5-monophosphate (CMP). The chain is 2-C-methyl-D-erythritol 2,4-cyclodiphosphate synthase from Shewanella baltica (strain OS155 / ATCC BAA-1091).